A 276-amino-acid polypeptide reads, in one-letter code: F-box/LRR-repeat protein 20 (276 aa).

One can recognise an F-box domain in the interval 22-68 (AVINKKLPKELLLRIFSFLDVVTLCRCAQVSRAWNVLALDGSNWQRI). LRR repeat units lie at residues 74-100 (QRDI…SLRG), 101-126 (CLGV…SLNG), 127-152 (CTKT…DLAS), 153-178 (CTSI…NISW), 179-204 (CDQV…FLKG), 205-230 (CTQL…NLQT), 231-256 (CLQI…CASG), and 257-276 (CSNI…PRLR).

In terms of assembly, interacts with SKP1 and CUL1. In terms of tissue distribution, widely expressed, with highest expression in skeletal muscle, heart and brain.

The protein resides in the cytoplasm. In terms of biological role, substrate-recognition component of the SCF (SKP1-CUL1-F-box protein)-type E3 ubiquitin ligase complex. Role in neural transmission. This chain is F-box/LRR-repeat protein 20 (Fbxl20), found in Rattus norvegicus (Rat).